The following is a 421-amino-acid chain: Serine--tRNA ligase (421 aa).

Residue T230 to E232 participates in L-serine binding. R259–E261 contributes to the ATP binding site. L-serine is bound at residue E282. Residue E346–S349 participates in ATP binding. An L-serine-binding site is contributed by S380.

It belongs to the class-II aminoacyl-tRNA synthetase family. Type-1 seryl-tRNA synthetase subfamily. As to quaternary structure, homodimer. The tRNA molecule binds across the dimer.

The protein localises to the cytoplasm. It catalyses the reaction tRNA(Ser) + L-serine + ATP = L-seryl-tRNA(Ser) + AMP + diphosphate + H(+). It carries out the reaction tRNA(Sec) + L-serine + ATP = L-seryl-tRNA(Sec) + AMP + diphosphate + H(+). It participates in aminoacyl-tRNA biosynthesis; selenocysteinyl-tRNA(Sec) biosynthesis; L-seryl-tRNA(Sec) from L-serine and tRNA(Sec): step 1/1. In terms of biological role, catalyzes the attachment of serine to tRNA(Ser). Is also able to aminoacylate tRNA(Sec) with serine, to form the misacylated tRNA L-seryl-tRNA(Sec), which will be further converted into selenocysteinyl-tRNA(Sec). The chain is Serine--tRNA ligase from Methanosarcina acetivorans (strain ATCC 35395 / DSM 2834 / JCM 12185 / C2A).